Reading from the N-terminus, the 430-residue chain is Gamma-glutamyl phosphate reductase (430 aa).

It belongs to the gamma-glutamyl phosphate reductase family.

The protein resides in the cytoplasm. The enzyme catalyses L-glutamate 5-semialdehyde + phosphate + NADP(+) = L-glutamyl 5-phosphate + NADPH + H(+). The protein operates within amino-acid biosynthesis; L-proline biosynthesis; L-glutamate 5-semialdehyde from L-glutamate: step 2/2. Functionally, catalyzes the NADPH-dependent reduction of L-glutamate 5-phosphate into L-glutamate 5-semialdehyde and phosphate. The product spontaneously undergoes cyclization to form 1-pyrroline-5-carboxylate. In Corynebacterium diphtheriae (strain ATCC 700971 / NCTC 13129 / Biotype gravis), this protein is Gamma-glutamyl phosphate reductase.